The primary structure comprises 353 residues: Quinolinate synthase (353 aa).

Iminosuccinate is bound by residues histidine 47 and serine 68. Cysteine 113 contributes to the [4Fe-4S] cluster binding site. Iminosuccinate is bound by residues 139-141 (YAN) and serine 156. Cysteine 200 lines the [4Fe-4S] cluster pocket. Iminosuccinate-binding positions include 226 to 228 (HPE) and threonine 243. Cysteine 297 is a binding site for [4Fe-4S] cluster.

It belongs to the quinolinate synthase family. Type 1 subfamily. [4Fe-4S] cluster serves as cofactor.

It localises to the cytoplasm. It carries out the reaction iminosuccinate + dihydroxyacetone phosphate = quinolinate + phosphate + 2 H2O + H(+). The protein operates within cofactor biosynthesis; NAD(+) biosynthesis; quinolinate from iminoaspartate: step 1/1. Catalyzes the condensation of iminoaspartate with dihydroxyacetone phosphate to form quinolinate. This chain is Quinolinate synthase, found in Pectobacterium carotovorum subsp. carotovorum (strain PC1).